Here is an 84-residue protein sequence, read N- to C-terminus: UPF0298 protein NWMN_0985 (84 aa).

It belongs to the UPF0298 family.

The protein resides in the cytoplasm. This is UPF0298 protein NWMN_0985 from Staphylococcus aureus (strain Newman).